The chain runs to 388 residues: Probable acetyl-CoA acetyltransferase (388 aa).

The active-site Acyl-thioester intermediate is the C84. Residue K187 forms an Isoglutamyl lysine isopeptide (Lys-Gln) (interchain with Q-Cter in protein Pup) linkage. Active-site proton acceptor residues include H345 and C375.

This sequence belongs to the thiolase-like superfamily. Thiolase family.

The enzyme catalyses 2 acetyl-CoA = acetoacetyl-CoA + CoA. The protein is Probable acetyl-CoA acetyltransferase of Mycolicibacterium smegmatis (strain ATCC 700084 / mc(2)155) (Mycobacterium smegmatis).